Consider the following 338-residue polypeptide: Ribonucleoside-diphosphate reductase small subunit (338 aa).

D81, E112, and H115 together coordinate Fe cation. Y119 is an active-site residue. Fe cation contacts are provided by E174, E208, and H211.

It belongs to the ribonucleoside diphosphate reductase small chain family. As to quaternary structure, heterodimer of a large and a small subunit. Fe cation serves as cofactor.

It is found in the cytoplasm. It carries out the reaction a 2'-deoxyribonucleoside 5'-diphosphate + [thioredoxin]-disulfide + H2O = a ribonucleoside 5'-diphosphate + [thioredoxin]-dithiol. Functionally, provides the precursors necessary for DNA synthesis. Catalyzes the biosynthesis of deoxyribonucleotides from the corresponding ribonucleotides. The protein is Ribonucleoside-diphosphate reductase small subunit (rnrB-1) of Dictyostelium discoideum (Social amoeba).